The following is a 795-amino-acid chain: Phenylalanine--tRNA ligase beta subunit (795 aa).

Residues 39–149 (SGEFSGVVVA…ADAPIGVDIR (111 aa)) form the tRNA-binding domain. In terms of domain architecture, B5 spans 402–477 (PKQPIIRLRR…RIYGYNRIPN (76 aa)). The Mg(2+) site is built by Asp455, Asp461, Glu464, and Glu465. In terms of domain architecture, FDX-ACB spans 701-794 (SKFPANNRDI…LAQRFQASLR (94 aa)).

It belongs to the phenylalanyl-tRNA synthetase beta subunit family. Type 1 subfamily. Tetramer of two alpha and two beta subunits. Mg(2+) is required as a cofactor.

It is found in the cytoplasm. The catalysed reaction is tRNA(Phe) + L-phenylalanine + ATP = L-phenylalanyl-tRNA(Phe) + AMP + diphosphate + H(+). The protein is Phenylalanine--tRNA ligase beta subunit of Haemophilus ducreyi (strain 35000HP / ATCC 700724).